Here is a 262-residue protein sequence, read N- to C-terminus: Type III pantothenate kinase (262 aa).

6 to 13 lines the ATP pocket; the sequence is DVGNTNTV. Substrate contacts are provided by residues tyrosine 101 and 108-111; that span reads GADR. Aspartate 110 (proton acceptor) is an active-site residue. Aspartate 130 serves as a coordination point for K(+). Threonine 133 serves as a coordination point for ATP. Threonine 186 is a substrate binding site.

Belongs to the type III pantothenate kinase family. As to quaternary structure, homodimer. It depends on NH4(+) as a cofactor. The cofactor is K(+).

It is found in the cytoplasm. It carries out the reaction (R)-pantothenate + ATP = (R)-4'-phosphopantothenate + ADP + H(+). It functions in the pathway cofactor biosynthesis; coenzyme A biosynthesis; CoA from (R)-pantothenate: step 1/5. In terms of biological role, catalyzes the phosphorylation of pantothenate (Pan), the first step in CoA biosynthesis. The chain is Type III pantothenate kinase from Desulforapulum autotrophicum (strain ATCC 43914 / DSM 3382 / VKM B-1955 / HRM2) (Desulfobacterium autotrophicum).